A 1536-amino-acid chain; its full sequence is Alpha-2-macroglobulin (1536 aa).

The signal sequence occupies residues Met1–Ala23. The segment at residues Cys919–Gln922 is a cross-link (isoglutamyl cysteine thioester (Cys-Gln)).

Belongs to the protease inhibitor I39 (alpha-2-macroglobulin) family. Bacterial alpha-2-macroglobulin subfamily.

In terms of biological role, protects the bacterial cell from peptidases. The chain is Alpha-2-macroglobulin from Thermotoga maritima (strain ATCC 43589 / DSM 3109 / JCM 10099 / NBRC 100826 / MSB8).